The chain runs to 364 residues: Aspartate aminotransferase (364 aa).

Positions 23, 99, and 143 each coordinate L-aspartate. Position 200 is an N6-(pyridoxal phosphate)lysine (Lys200). Arg320 lines the L-aspartate pocket.

It belongs to the class-I pyridoxal-phosphate-dependent aminotransferase family. Homodimer. Pyridoxal 5'-phosphate serves as cofactor.

It is found in the cytoplasm. It carries out the reaction L-aspartate + 2-oxoglutarate = oxaloacetate + L-glutamate. The polypeptide is Aspartate aminotransferase (aspC) (Thermococcus kodakarensis (strain ATCC BAA-918 / JCM 12380 / KOD1) (Pyrococcus kodakaraensis (strain KOD1))).